Consider the following 204-residue polypeptide: Putative glutathione S-transferase alpha-3 (204 aa).

Threonine 2 carries the N-acetylthreonine modification. The GST N-terminal domain occupies 2 to 79 (TKPQLSYFKV…YIASQHDFVG (78 aa)). Glutathione contacts are provided by residues tyrosine 8, 49-50 (QL), and 63-64 (QS). One can recognise a GST C-terminal domain in the interval 81–202 (TPEEKALVDE…YLKNRPITER (122 aa)).

This sequence belongs to the GST superfamily. Alpha family.

The enzyme catalyses RX + glutathione = an S-substituted glutathione + a halide anion + H(+). In terms of biological role, conjugation of reduced glutathione to a wide number of exogenous and endogenous hydrophobic electrophiles. This is Putative glutathione S-transferase alpha-3 (gsta3) from Dictyostelium discoideum (Social amoeba).